Consider the following 572-residue polypeptide: Mitochondrial distribution and morphology protein 34 (572 aa).

The region spanning M1–L195 is the SMP-LTD domain. Disordered regions lie at residues T212 to L236, G355 to D426, H487 to R507, and A552 to H572. A compositionally biased stretch (basic residues) spans R358–R370. Residues V371 to D381 show a composition bias toward basic and acidic residues. Residues S387 to S400 show a composition bias toward polar residues.

The protein belongs to the MDM34 family. In terms of assembly, component of the ER-mitochondria encounter structure (ERMES) or MDM complex, composed of mmm1, mdm10, mdm12 and mdm34.

It localises to the mitochondrion outer membrane. Component of the ERMES/MDM complex, which serves as a molecular tether to connect the endoplasmic reticulum (ER) and mitochondria. Components of this complex are involved in the control of mitochondrial shape and protein biogenesis, and function in nonvesicular lipid trafficking between the ER and mitochondria. Mdm34 is required for the interaction of the ER-resident membrane protein mmm1 and the outer mitochondrial membrane-resident beta-barrel protein mdm10. The chain is Mitochondrial distribution and morphology protein 34 from Aspergillus fumigatus (strain ATCC MYA-4609 / CBS 101355 / FGSC A1100 / Af293) (Neosartorya fumigata).